The following is a 58-amino-acid chain: uncharacterized protein (58 aa).

This is an uncharacterized protein from Bacillus subtilis (strain 168).